A 284-amino-acid polypeptide reads, in one-letter code: Acetylglutamate kinase (284 aa).

Residues Gly-64–Gly-65, Arg-86, and Asn-181 each bind substrate.

It belongs to the acetylglutamate kinase family. ArgB subfamily.

Its subcellular location is the cytoplasm. It carries out the reaction N-acetyl-L-glutamate + ATP = N-acetyl-L-glutamyl 5-phosphate + ADP. It participates in amino-acid biosynthesis; L-arginine biosynthesis; N(2)-acetyl-L-ornithine from L-glutamate: step 2/4. Its function is as follows. Catalyzes the ATP-dependent phosphorylation of N-acetyl-L-glutamate. The sequence is that of Acetylglutamate kinase from Wolinella succinogenes (strain ATCC 29543 / DSM 1740 / CCUG 13145 / JCM 31913 / LMG 7466 / NCTC 11488 / FDC 602W) (Vibrio succinogenes).